A 201-amino-acid polypeptide reads, in one-letter code: Regulator of G-protein signaling 1 (201 aa).

One can recognise an RGS domain in the interval 75–191; sequence SLEKLLVSEE…LKSEIFFRLA (117 aa).

Its subcellular location is the cell membrane. It localises to the cytoplasm. The protein resides in the cytosol. In terms of biological role, regulates G protein-coupled receptor signaling cascades, including signaling downstream of the N-formylpeptide chemoattractant receptors and leukotriene receptors. Inhibits B cell chemotaxis. Inhibits signal transduction by increasing the GTPase activity of G protein alpha subunits, thereby driving them into their inactive GDP-bound form. This is Regulator of G-protein signaling 1 (rgs1) from Xenopus laevis (African clawed frog).